Consider the following 184-residue polypeptide: Protein GrpE (184 aa).

Residues 1–24 (MADEQLDEKNLNSEEAGAVNGDAR) are disordered.

This sequence belongs to the GrpE family. Homodimer.

The protein localises to the cytoplasm. Its function is as follows. Participates actively in the response to hyperosmotic and heat shock by preventing the aggregation of stress-denatured proteins, in association with DnaK and GrpE. It is the nucleotide exchange factor for DnaK and may function as a thermosensor. Unfolded proteins bind initially to DnaJ; upon interaction with the DnaJ-bound protein, DnaK hydrolyzes its bound ATP, resulting in the formation of a stable complex. GrpE releases ADP from DnaK; ATP binding to DnaK triggers the release of the substrate protein, thus completing the reaction cycle. Several rounds of ATP-dependent interactions between DnaJ, DnaK and GrpE are required for fully efficient folding. In Pseudomonas entomophila (strain L48), this protein is Protein GrpE.